A 357-amino-acid polypeptide reads, in one-letter code: Acyl-coenzyme A:6-aminopenicillanic-acid-acyltransferase 40 kDa form (357 aa).

6-aminopenicillanate contacts are provided by aspartate 121 and arginine 310.

The protein belongs to the peptidase C45 family. The active form of the enzyme results from processing of the 40-kDa monomeric precursor to a heterodimer containing subunits of 11 and 29 kDa. The pre-AAT protein is synthesized as 40 kDa precursor which is then self-processed into an 11 kDa (protein A) and a 29 kDa (protein B). The B protein carries AAT activity.

It is found in the peroxisome matrix. The enzyme catalyses isopenicillin N + phenylacetyl-CoA + H2O = penicillin G + L-2-aminoadipate + CoA + H(+). The protein operates within antibiotic biosynthesis; penicillin G biosynthesis; penicillin G from L-alpha-aminoadipate and L-cysteine and L-valine: step 3/3. Functionally, nonribosomal peptide synthetase; part of the gene cluster that mediates the biosynthesis of penicillin, the world's most important antibiotic. AatA catalyzes the exchange of the alpha-aminoadipyl side chain of isopenicillin N for phenylacetic acid to yield penicillin. This step occurs in the peroxisomal matrix and the penM and paaT transporters are involved in the isopenicillin N and phenylacetic acid import into the peroxisome, respectively. The penicillin biosynthesis occurs via 3 enzymatic steps, the first corresponding to the production of the tripeptide N-[(5S)-5-amino-5-carboxypentanoyl]-L-cysteinyl-D-valine (LLD-ACV or ACV) by the NRPS acvA. The tripeptide ACV is then cyclized to isopenicillin N (IPN) by the isopenicillin N synthase ipnA that forms the beta-lactam nucleus. Finally, the alpha-aminoadipyl side chain is exchanged for phenylacetic acid by the isopenicillin N acyltransferase penDE to yield penicillin in the peroxisomal matrix. The protein is Acyl-coenzyme A:6-aminopenicillanic-acid-acyltransferase 40 kDa form of Emericella nidulans (strain FGSC A4 / ATCC 38163 / CBS 112.46 / NRRL 194 / M139) (Aspergillus nidulans).